The primary structure comprises 516 residues: MEFYDGDLKDIWDSDLDPESLKISPDHDMHDWLFDRDVKDPTVILNDKLISDALLNGTQPIKTEHSYSLSSDVDSLPDSPKSLQAKIEDMDDECFPAISPKTATNGRVTIDPKYLTFHVPPTHATPISRLSSNPALNTSVADLTRSSGLQSLQAHQPHHGSGSSHVVVANLEHFQLPQHLYDNDCSSSVSSLRDGSMSPDICSDIEIDESAIKDEPMSPDSSCPASPTSQASSSQHQLSLNLAHLQSEMLFEPKHCGLLLTASSNSNNSLIKSQQRQQQILGQDNLLMAKMEIKSEKQSTSNSSDKSHAHGYGIPLTPPSSLPSDDSEGNLSPEHLFAPLSPNATVSISVANPAGGESSVRVSRTAASITRSSSGSASASGSSTSSTVTTTRQPIHTPLISSQPKGSTGTLLLTEEEKRTLLAEGYPIPQKLPLTKAEEKSLKKIRRKIKNKISAQESRRKKKEYMDQLERRVEILVTENHDYKKRLEGLEETNANLLSQLHKLQALVSKHNVKKS.

3 positions are modified to phosphoserine: serine 75, serine 79, and serine 82. 3 disordered regions span residues 213-237 (KDEP…SQHQ), 294-338 (KSEK…HLFA), and 353-408 (PAGG…KGST). Residues 221-237 (SSCPASPTSQASSSQHQ) are compositionally biased toward low complexity. Residues 361–392 (RVSRTAASITRSSSGSASASGSSTSSTVTTTR) are compositionally biased toward low complexity. One can recognise a bZIP domain in the interval 441-504 (SLKKIRRKIK…ANLLSQLHKL (64 aa)). Residues 443–463 (KKIRRKIKNKISAQESRRKKK) form a basic motif region. A leucine-zipper region spans residues 469 to 476 (LERRVEIL).

This sequence belongs to the bZIP family. In terms of assembly, may bind DNA as heterodimers with other bZIP proteins. In all cell types examined, including developing salivary gland in embryos and in adults, brain and optic lobe cell bodies, salivary gland, midgut epithelial cells of the cardia, female ovarian columnar follicle cells and male seminal vesicle, ejaculatory duct, and ejaculatory bulb.

It is found in the nucleus. In terms of biological role, transcriptional activator. Binds to fat body-specific enhancers of alcohol dehydrogenase (ADH) and yolk protein genes. BBF-2 may play a role in fat body gene expression. It binds the consensus sequence 5'-T[AC]NACGTAN[TG]C-3'. The sequence is that of Cyclic AMP response element-binding protein A (CrebA) from Drosophila melanogaster (Fruit fly).